A 572-amino-acid chain; its full sequence is MCSISFVNLISMSLSCFLLSLYFLLNDMIYFIEWELVSLNSMSIVMTFLFDWMSLLFMSFVLMISSLVIFYSKEYMMNDNHINRFIMLVLMFVLSMMLLIISPNLISILLGWDGLGLVSYCLVIYFQNIKSYNAGMLTALSNRIGDVALLLSIAWMLNYGSWNYIFYLEIMQNEFEMLMIGSLVMLAAMTKSAQIPFSSWLPAAMAAPTPVSALVHSSTLVTAGVYLLIRFNIILSTSWLGQLMLLLSGLTMFMAGLGANFEFDLKKIIALSTLSQLGLMMSILSMGFLKLAMFHLLTHALFKALLFMCAGAIIHNMNNSQDIRLMGGLSIHMPLTSACFNVSNLALCGMPFLAGFYSKDMILEIVSISNVNMFSFFLYYFSTGLTVSYSFRLVYYSMTGDLNCGSLNMLNDESWIMLRGMMGLLIMSIIGGSMLNWLIFPFPYMICLPIYMKLLTLFVCIVGGLFGYLISLSNLFFLNKSLFMYNLSTFLGSMWFMPYISTYGMIFYPLNYGQLVVKSFDQGWSEYFGGQHLYQKLSMYSKTLFLMHNNSLKIYLLLFVFWILILLILLFL.

Transmembrane regions (helical) follow at residues 4–24, 44–64, 86–106, 107–127, 147–167, 170–190, 217–237, 239–259, 268–288, 294–314, 337–357, 372–394, 422–442, 457–477, 490–510, and 552–572; these read ISFV…LYFL, IVMT…VLMI, IMLV…PNLI, SILL…IYFQ, VALL…YIFY, IMQN…AAMT, SSTL…ILST, WLGQ…GLGA, IIAL…SMGF, FHLL…GAII, SACF…AGFY, NMFS…FRLV, MGLL…IFPF, LFVC…NLFF, FLGS…FYPL, and LKIY…LLFL.

Belongs to the complex I subunit 5 family.

Its subcellular location is the mitochondrion inner membrane. The catalysed reaction is a ubiquinone + NADH + 5 H(+)(in) = a ubiquinol + NAD(+) + 4 H(+)(out). Functionally, core subunit of the mitochondrial membrane respiratory chain NADH dehydrogenase (Complex I) that is believed to belong to the minimal assembly required for catalysis. Complex I functions in the transfer of electrons from NADH to the respiratory chain. The immediate electron acceptor for the enzyme is believed to be ubiquinone. The protein is NADH-ubiquinone oxidoreductase chain 5 (mt:ND5) of Drosophila melanogaster (Fruit fly).